We begin with the raw amino-acid sequence, 102 residues long: Large ribosomal subunit protein bL21 (102 aa).

It belongs to the bacterial ribosomal protein bL21 family. Part of the 50S ribosomal subunit. Contacts protein L20.

Functionally, this protein binds to 23S rRNA in the presence of protein L20. This chain is Large ribosomal subunit protein bL21, found in Desulfovibrio desulfuricans (strain ATCC 27774 / DSM 6949 / MB).